We begin with the raw amino-acid sequence, 324 residues long: tRNA dimethylallyltransferase (324 aa).

G18–T25 lines the ATP pocket. Residue T20–T25 participates in substrate binding. The interval D43–Q46 is interaction with substrate tRNA.

The protein belongs to the IPP transferase family. As to quaternary structure, monomer. Mg(2+) is required as a cofactor.

The catalysed reaction is adenosine(37) in tRNA + dimethylallyl diphosphate = N(6)-dimethylallyladenosine(37) in tRNA + diphosphate. Its function is as follows. Catalyzes the transfer of a dimethylallyl group onto the adenine at position 37 in tRNAs that read codons beginning with uridine, leading to the formation of N6-(dimethylallyl)adenosine (i(6)A). The chain is tRNA dimethylallyltransferase from Salinibacter ruber (strain DSM 13855 / M31).